Reading from the N-terminus, the 230-residue chain is Orotidine 5'-phosphate decarboxylase (230 aa).

Substrate-binding positions include Asp10, Lys31, 58–67 (DLKLHDIPNT), Thr117, Arg179, Gln188, Gly208, and Arg209. Catalysis depends on Lys60, which acts as the Proton donor.

Belongs to the OMP decarboxylase family. Type 1 subfamily. Homodimer.

It carries out the reaction orotidine 5'-phosphate + H(+) = UMP + CO2. The protein operates within pyrimidine metabolism; UMP biosynthesis via de novo pathway; UMP from orotate: step 2/2. In terms of biological role, catalyzes the decarboxylation of orotidine 5'-monophosphate (OMP) to uridine 5'-monophosphate (UMP). The protein is Orotidine 5'-phosphate decarboxylase of Staphylococcus aureus (strain bovine RF122 / ET3-1).